We begin with the raw amino-acid sequence, 162 residues long: Phosphopantetheine adenylyltransferase (162 aa).

Residue serine 11 participates in substrate binding. Residues 11 to 12 (SF) and histidine 19 contribute to the ATP site. Substrate is bound by residues lysine 43, leucine 75, and arginine 89. ATP-binding positions include 90–92 (GLR), glutamate 100, and 125–131 (YSYLSSS).

Belongs to the bacterial CoaD family. As to quaternary structure, homohexamer. Mg(2+) is required as a cofactor.

It is found in the cytoplasm. It carries out the reaction (R)-4'-phosphopantetheine + ATP + H(+) = 3'-dephospho-CoA + diphosphate. Its pathway is cofactor biosynthesis; coenzyme A biosynthesis; CoA from (R)-pantothenate: step 4/5. Reversibly transfers an adenylyl group from ATP to 4'-phosphopantetheine, yielding dephospho-CoA (dPCoA) and pyrophosphate. This Geotalea uraniireducens (strain Rf4) (Geobacter uraniireducens) protein is Phosphopantetheine adenylyltransferase.